We begin with the raw amino-acid sequence, 130 residues long: Large ribosomal subunit protein bL12 (130 aa).

This sequence belongs to the bacterial ribosomal protein bL12 family. In terms of assembly, homodimer. Part of the ribosomal stalk of the 50S ribosomal subunit. Forms a multimeric L10(L12)X complex, where L10 forms an elongated spine to which 2 to 4 L12 dimers bind in a sequential fashion. Binds GTP-bound translation factors.

Forms part of the ribosomal stalk which helps the ribosome interact with GTP-bound translation factors. Is thus essential for accurate translation. The chain is Large ribosomal subunit protein bL12 from Cutibacterium acnes (strain DSM 16379 / KPA171202) (Propionibacterium acnes).